The chain runs to 332 residues: Receptor polysaccharide phosphotransferase WefC (332 aa).

It belongs to the stealth family.

The sequence is that of Receptor polysaccharide phosphotransferase WefC (wefC) from Streptococcus oralis.